Here is a 151-residue protein sequence, read N- to C-terminus: Small ribosomal subunit protein uS13 (151 aa).

It belongs to the universal ribosomal protein uS13 family. In terms of assembly, part of the 30S ribosomal subunit. Forms a loose heterodimer with protein S19. Forms two bridges to the 50S subunit in the 70S ribosome.

Functionally, located at the top of the head of the 30S subunit, it contacts several helices of the 16S rRNA. In the 70S ribosome it contacts the 23S rRNA (bridge B1a) and protein L5 of the 50S subunit (bridge B1b), connecting the 2 subunits; these bridges are implicated in subunit movement. The chain is Small ribosomal subunit protein uS13 from Staphylothermus marinus (strain ATCC 43588 / DSM 3639 / JCM 9404 / F1).